A 495-amino-acid polypeptide reads, in one-letter code: WD repeat-containing protein 37 (495 aa).

Residues methionine 1 to aspartate 34 are disordered. Residues serine 22–serine 31 show a composition bias toward polar residues. 2 WD repeats span residues glycine 154–lysine 194 and glycine 197–glutamine 236. Positions proline 237–cysteine 268 are disordered. The segment covering glycine 246–alanine 264 has biased composition (acidic residues). WD repeat units follow at residues serine 280 to serine 319, glycine 322 to valine 361, glycine 366 to alanine 404, arginine 407 to leucine 446, and glycine 453 to glutamate 494.

It localises to the cytoplasm. The protein localises to the nucleus. The sequence is that of WD repeat-containing protein 37 (wdr37) from Xenopus laevis (African clawed frog).